The chain runs to 739 residues: Sulfate transporter (739 aa).

2 stretches are compositionally biased toward basic and acidic residues: residues 1-17 (MSSENKEQHDLSPRDLP) and 31-46 (TQRRSGTDLRQSETGH). A disordered region spans residues 1–47 (MSSENKEQHDLSPRDLPEEAFGFPSELPLETQRRSGTDLRQSETGHG). Phosphoserine is present on S12. 2 helical membrane passes run 112–132 (VMSGLIVGILLVPQSIAYSLL) and 137–157 (PIYGLYTSFFASIIYFLFGTS). An N-linked (GlcNAc...) asparagine glycan is attached at N205. The next 2 helical transmembrane spans lie at 227-247 (FMAGVYQVAMGFFQVGFVSVY) and 255-275 (GFVTGASFTILTSQAKYLLGL). N-linked (GlcNAc...) asparagine glycosylation occurs at N357. A run of 4 helical transmembrane segments spans residues 378–398 (LIPNVAVDAIAISIIGFAITV), 420–440 (AIGFCNIIPSFFHCITTSAAL), 455–475 (LSAIVTALVLLLVLLVIAPLF), and 524–544 (LLSTEIGLLVGVCFSMFCVIL). The region spanning 568–719 (TYKNLRSKSG…YSLSEAVAFA (152 aa)) is the STAS domain.

The protein belongs to the SLC26A/SulP transporter (TC 2.A.53) family. In terms of processing, N-glycosylated. In terms of tissue distribution, distributed mainly in the thymus, testis and osteoblastic cells. Highly expressed in the bone, cartilage, kidney and colon.

Its subcellular location is the cell membrane. The protein localises to the apical cell membrane. It carries out the reaction oxalate(in) + sulfate(out) = oxalate(out) + sulfate(in). The catalysed reaction is sulfate(out) + 2 chloride(in) = sulfate(in) + 2 chloride(out). It catalyses the reaction oxalate(out) + 2 chloride(in) = oxalate(in) + 2 chloride(out). The enzyme catalyses bromide(in) + chloride(out) = bromide(out) + chloride(in). It carries out the reaction nitrate(in) + chloride(out) = nitrate(out) + chloride(in). The catalysed reaction is iodide(in) + chloride(out) = iodide(out) + chloride(in). In terms of biological role, sulfate transporter which mediates sulfate uptake into chondrocytes in order to maintain adequate sulfation of proteoglycans which is needed for cartilage development. Mediates electroneutral anion exchange of sulfate ions for oxalate ions, sulfate and oxalate ions for chloride and/or hydroxyl ions and chloride ions for bromide, iodide and nitrate ions. The coupling of sulfate transport to both hydroxyl and chloride ions likely serves to ensure transport at both acidic pH when most sulfate uptake is mediated by sulfate-hydroxide exchange and alkaline pH when most sulfate uptake is mediated by sulfate-chloride exchange. Essential for chondrocyte proliferation, differentiation and cell size expansion. The chain is Sulfate transporter (Slc26a2) from Mus musculus (Mouse).